Consider the following 224-residue polypeptide: CMRF35-like molecule 6 (224 aa).

Positions 1–20 (MTARAWASWRSSALLLLLVP) are cleaved as a signal peptide. At 21 to 183 (GYFPLSHPMT…HPGSLFSNVR (163 aa)) the chain is on the extracellular side. Positions 22-130 (YFPLSHPMTV…HDPIVEVEVS (109 aa)) constitute an Ig-like V-type domain. 2 cysteine pairs are disulfide-bonded: cysteine 43–cysteine 110 and cysteine 57–cysteine 65. Residues asparagine 90 and asparagine 99 are each glycosylated (N-linked (GlcNAc...) asparagine). Polar residues predominate over residues 136 to 151 (TTTASSPQSSMGTSGP). The tract at residues 136–174 (TTTASSPQSSMGTSGPPTKLPVHTWPSVTRKDSPEPSPH) is disordered. The helical transmembrane segment at 184–204 (FLLLVLLELPLLLSMLGAVLW) threads the bilayer. The Cytoplasmic segment spans residues 205 to 224 (VNRPQRSSRSRQNWPKGENQ).

The protein belongs to the CD300 family. Present on the surface of monocytes, neutrophils, a proportion of peripheral blood T- and B-lymphocytes and lymphocytic cell lines.

It is found in the cell membrane. This is CMRF35-like molecule 6 (CD300C) from Homo sapiens (Human).